The chain runs to 188 residues: Probable DNA-directed RNA polymerase subunit delta (188 aa).

The region spanning 14 to 83 (LSMIEVARAI…GENKWGLRSW (70 aa)) is the HTH HARE-type domain. A disordered region spans residues 119–188 (EDAIDYSADD…EDEEDEDEEE (70 aa)).

It belongs to the RpoE family. RNAP is composed of a core of 2 alpha, a beta and a beta' subunits. The core is associated with a delta subunit and one of several sigma factors.

In terms of biological role, participates in both the initiation and recycling phases of transcription. In the presence of the delta subunit, RNAP displays an increased specificity of transcription, a decreased affinity for nucleic acids, and an increased efficiency of RNA synthesis because of enhanced recycling. This is Probable DNA-directed RNA polymerase subunit delta from Streptococcus equi subsp. zooepidemicus (strain H70).